Reading from the N-terminus, the 651-residue chain is Bromodomain-containing protein 7 (651 aa).

2 disordered regions span residues 36–133 (ELST…EVEQ) and 257–298 (KDKV…KKKD). The span at 58-69 (HKDRKRKKRKKG) shows a compositional bias: basic residues. Positions 65-96 (KRKKGEKQVPGEEKEKRKRKVKEDKRKRDREH) match the Nuclear localization signal motif. The segment covering 70 to 105 (EKQVPGEEKEKRKRKVKEDKRKRDREHPDSEGEQEL) has biased composition (basic and acidic residues). The region spanning 131-235 (VEQTPLQEAL…HSGMKILSQE (105 aa)) is the Bromo domain. Residues 271–298 (GSGKDKGEPVDGDTKAFKTPNKEHKKKD) show a composition bias toward basic and acidic residues. A coiled-coil region spans residues 533 to 564 (SEEAEIFQRKLDETTKLLRELQDAQNERLSTK).

It is found in the nucleus. The protein resides in the chromosome. In terms of biological role, acts both as coactivator and as corepressor. May play a role in chromatin remodeling. Participates in the Wnt signaling pathway. Transcriptional corepressor that down-regulates the expression of target genes. Binds to target promoters, leading to increased histone H3 acetylation. Coactivator for TP53-mediated activation of transcription of a set of target genes. Required for TP53-mediated cell-cycle arrest in response to oncogene activation. Inhibits cell cycle progression from G1 to S phase. This chain is Bromodomain-containing protein 7 (BRD7), found in Gallus gallus (Chicken).